Here is a 205-residue protein sequence, read N- to C-terminus: Small ribosomal subunit protein uS4 (205 aa).

The S4 RNA-binding domain occupies 95-158 (SRLDNIVYRM…TKSPLVKNFI (64 aa)).

This sequence belongs to the universal ribosomal protein uS4 family. Part of the 30S ribosomal subunit. Contacts protein S5. The interaction surface between S4 and S5 is involved in control of translational fidelity.

Its function is as follows. One of the primary rRNA binding proteins, it binds directly to 16S rRNA where it nucleates assembly of the body of the 30S subunit. With S5 and S12 plays an important role in translational accuracy. In Mycoplasma genitalium (strain ATCC 33530 / DSM 19775 / NCTC 10195 / G37) (Mycoplasmoides genitalium), this protein is Small ribosomal subunit protein uS4.